A 198-amino-acid chain; its full sequence is Eukaryotic translation initiation factor isoform 4E (198 aa).

The tract at residues 1–25 (MATDDVNEPLPAAAELPATEAEKQP) is disordered. A2 carries the N-acetylalanine modification. The span at 8–19 (EPLPAAAELPAT) shows a compositional bias: low complexity. Residues 46–47 (WG) and 92–93 (WE) each bind mRNA. C97 and C138 are disulfide-bonded. 145 to 152 (RPQSKQDK) provides a ligand contact to mRNA.

The protein belongs to the eukaryotic initiation factor 4E family. As to quaternary structure, EIF4F is a multi-subunit complex, the composition of which varies with external and internal environmental conditions. It is composed of at least EIF4A, EIF4E and EIF4G. EIF4E is also known to interact with other partners. In higher plants two isoforms of EIF4F have been identified, named isoform EIF4F and isoform EIF(iso)4F. Isoform EIF4F has subunits p220 and p26, whereas isoform EIF(iso)4F has subunits p82 and p28. This isoform interacts with the viral protein genome linked (VPg)-proteinase of turnip mosaic potyvirus. Interacts directly with LOX2. Interacts with BTF3. Post-translationally, according to the redox status, the Cys-97-Cys-138 disulfide bridge may have a role in regulating protein function by affecting its ability to bind capped mRNA. As to expression, abundant in floral organs and in young developing tissues.

Its function is as follows. Recognizes and binds the 7-methylguanosine-containing mRNA cap during an early step in the initiation of protein synthesis and facilitates ribosome binding by inducing the unwinding of the mRNAs secondary structures. Mediates susceptibility to Turnipmosaic potyvirus (TuMV) and Tobacco etch potyvirus (TEV). In Arabidopsis thaliana (Mouse-ear cress), this protein is Eukaryotic translation initiation factor isoform 4E (EIF(ISO)4E).